The sequence spans 140 residues: Large ribosomal subunit protein uL11 (140 aa).

It belongs to the universal ribosomal protein uL11 family. As to quaternary structure, part of the ribosomal stalk of the 50S ribosomal subunit. Interacts with L10 and the large rRNA to form the base of the stalk. L10 forms an elongated spine to which L12 dimers bind in a sequential fashion forming a multimeric L10(L12)X complex. Post-translationally, one or more lysine residues are methylated.

In terms of biological role, forms part of the ribosomal stalk which helps the ribosome interact with GTP-bound translation factors. The chain is Large ribosomal subunit protein uL11 from Campylobacter hominis (strain ATCC BAA-381 / DSM 21671 / CCUG 45161 / LMG 19568 / NCTC 13146 / CH001A).